Reading from the N-terminus, the 268-residue chain is tRNA pseudouridine synthase A (268 aa).

Catalysis depends on D52, which acts as the Nucleophile. Y110 is a binding site for substrate.

Belongs to the tRNA pseudouridine synthase TruA family. In terms of assembly, homodimer.

The catalysed reaction is uridine(38/39/40) in tRNA = pseudouridine(38/39/40) in tRNA. Its function is as follows. Formation of pseudouridine at positions 38, 39 and 40 in the anticodon stem and loop of transfer RNAs. In Prochlorococcus marinus (strain MIT 9301), this protein is tRNA pseudouridine synthase A.